The chain runs to 644 residues: Translation factor guf1, mitochondrial (644 aa).

Residues 1–31 (MTLRRFSYTFQARILRGLQARPVFVLPSRSH) constitute a mitochondrion transit peptide. In terms of domain architecture, tr-type G spans 51–232 (VNIRNWAIIS…AIIQRVPHPI (182 aa)). GTP contacts are provided by residues 60-67 (SHIDHGKS), 125-129 (DTPGH), and 179-182 (NKID).

Belongs to the TRAFAC class translation factor GTPase superfamily. Classic translation factor GTPase family. LepA subfamily.

The protein resides in the mitochondrion inner membrane. It catalyses the reaction GTP + H2O = GDP + phosphate + H(+). Functionally, promotes mitochondrial protein synthesis. May act as a fidelity factor of the translation reaction, by catalyzing a one-codon backward translocation of tRNAs on improperly translocated ribosomes. Binds to mitochondrial ribosomes in a GTP-dependent manner. This is Translation factor guf1, mitochondrial (guf1) from Schizosaccharomyces japonicus (strain yFS275 / FY16936) (Fission yeast).